The following is a 111-amino-acid chain: UPF0321 protein P20C8.02c (111 aa).

A signal peptide spans 1–17; the sequence is MLLLFCICCVFIKLVLA. Residue asparagine 20 is glycosylated (N-linked (GlcNAc...) asparagine).

It belongs to the UPF0321 family.

In Schizosaccharomyces pombe (strain 972 / ATCC 24843) (Fission yeast), this protein is UPF0321 protein P20C8.02c.